The following is a 346-amino-acid chain: tRNA N6-adenosine threonylcarbamoyltransferase (346 aa).

Fe cation is bound by residues His111 and His115. Substrate-binding positions include 134 to 138, Asp167, Gly180, and Asn277; that span reads LVSGG. Asp305 serves as a coordination point for Fe cation.

Belongs to the KAE1 / TsaD family. Fe(2+) is required as a cofactor.

Its subcellular location is the cytoplasm. It carries out the reaction L-threonylcarbamoyladenylate + adenosine(37) in tRNA = N(6)-L-threonylcarbamoyladenosine(37) in tRNA + AMP + H(+). Functionally, required for the formation of a threonylcarbamoyl group on adenosine at position 37 (t(6)A37) in tRNAs that read codons beginning with adenine. Is involved in the transfer of the threonylcarbamoyl moiety of threonylcarbamoyl-AMP (TC-AMP) to the N6 group of A37, together with TsaE and TsaB. TsaD likely plays a direct catalytic role in this reaction. This chain is tRNA N6-adenosine threonylcarbamoyltransferase, found in Bordetella pertussis (strain Tohama I / ATCC BAA-589 / NCTC 13251).